We begin with the raw amino-acid sequence, 270 residues long: Formamidopyrimidine-DNA glycosylase (270 aa).

Catalysis depends on proline 2, which acts as the Schiff-base intermediate with DNA. The Proton donor role is filled by glutamate 3. Lysine 58 acts as the Proton donor; for beta-elimination activity in catalysis. Residues histidine 91, arginine 110, and arginine 151 each contribute to the DNA site. An FPG-type zinc finger spans residues phenylalanine 236 to arginine 270. Arginine 260 (proton donor; for delta-elimination activity) is an active-site residue.

This sequence belongs to the FPG family. In terms of assembly, monomer. Requires Zn(2+) as cofactor.

It catalyses the reaction Hydrolysis of DNA containing ring-opened 7-methylguanine residues, releasing 2,6-diamino-4-hydroxy-5-(N-methyl)formamidopyrimidine.. The enzyme catalyses 2'-deoxyribonucleotide-(2'-deoxyribose 5'-phosphate)-2'-deoxyribonucleotide-DNA = a 3'-end 2'-deoxyribonucleotide-(2,3-dehydro-2,3-deoxyribose 5'-phosphate)-DNA + a 5'-end 5'-phospho-2'-deoxyribonucleoside-DNA + H(+). Its function is as follows. Involved in base excision repair of DNA damaged by oxidation or by mutagenic agents. Acts as a DNA glycosylase that recognizes and removes damaged bases. Has a preference for oxidized purines, such as 7,8-dihydro-8-oxoguanine (8-oxoG). Has AP (apurinic/apyrimidinic) lyase activity and introduces nicks in the DNA strand. Cleaves the DNA backbone by beta-delta elimination to generate a single-strand break at the site of the removed base with both 3'- and 5'-phosphates. The sequence is that of Formamidopyrimidine-DNA glycosylase from Ectopseudomonas mendocina (strain ymp) (Pseudomonas mendocina).